The primary structure comprises 75 residues: Putative DNA-directed RNA polymerase subunit omega (75 aa).

Belongs to the RNA polymerase subunit omega family.

It localises to the plastid. The protein localises to the chloroplast. The catalysed reaction is RNA(n) + a ribonucleoside 5'-triphosphate = RNA(n+1) + diphosphate. Functionally, may be involved in RNA polymerase activity. The chain is Putative DNA-directed RNA polymerase subunit omega from Pyropia yezoensis (Susabi-nori).